The sequence spans 89 residues: MAITRKNLVAFCFTILFIISSIHCLPTTARSPGYEIGPQRRRRVTCFSFSFCKPARGLASCDLFCKRLKFESGLCTGDLEKCCCIDYIN.

Residues 1-24 form the signal peptide; that stretch reads MAITRKNLVAFCFTILFIISSIHC. 4 disulfide bridges follow: cysteine 46–cysteine 84, cysteine 52–cysteine 75, cysteine 61–cysteine 82, and cysteine 65–cysteine 83.

It belongs to the DEFL family.

Its subcellular location is the secreted. The chain is Defensin-like protein 103 from Arabidopsis thaliana (Mouse-ear cress).